The primary structure comprises 412 residues: MGQDQTKQQIEKGLQLYQSNQTEKALQVWTKVLEKSSDLMGRFRVLGCLVTAHSEMGRYKEMLKFAVVQIDTARELEDADFLLESYLNLARSNEKLCEFHKTISYCKTCLGLPGTRAGAQLGGQVSLSMGNAFLGLSVFQKALESFEKALRYAHNNDDAMLECRVCCSLGSFYAQVKDYEKALFFPCKAAELVNNYGKGWSLKYRAMSQYHMAVAYRLLGRLGSAMECCEESMKIALQHGDRPLQALCLLCFADIHRSRGDLETAFPRYDSAMSIMTEIGNRLGQVQALLGVAKCWVARKALDKALDAIERAQDLAEEVGNKLSQLKLHCLSESIYRSKGLQRELRAHVVRFHECVEETELYCGLCGESIGEKNSRLQALPCSHIFHLRCLQNNGTRSCPNCRRSSMKPGFV.

G2 carries the N-myristoyl glycine lipid modification. TPR repeat units lie at residues 6-39 (TKQQ…SSDL), 83-116 (LESY…PGTR), 123-156 (GQVS…AHNN), 163-196 (CRVC…VNNY), 206-239 (AMSQ…ALQH), 246-279 (ALCL…MTEI), and 286-319 (VQAL…AEEV). A Phosphotyrosine modification is found at Y196. The RING-type zinc finger occupies 363-403 (CGLCGESIGEKNSRLQALPCSHIFHLRCLQNNGTRSCPNCR). S405 is subject to Phosphoserine.

The protein belongs to the RAPsyn family. Ubiquitinated by the BCR(KLHL8) complex, leading to its degradation.

It is found in the cell membrane. The protein resides in the postsynaptic cell membrane. Its subcellular location is the cytoplasm. The protein localises to the cytoskeleton. Functionally, postsynaptic protein required for clustering of nicotinic acetylcholine receptors (nAChRs) at the neuromuscular junction. It may link the receptor to the underlying postsynaptic cytoskeleton, possibly by direct association with actin or spectrin. The protein is 43 kDa receptor-associated protein of the synapse (RAPSN) of Homo sapiens (Human).